A 99-amino-acid polypeptide reads, in one-letter code: Regulatory protein FanB (99 aa).

In terms of biological role, trans-acting protein involved in the regulation of the biogenesis of K99 fimbriae (FanC). The protein is Regulatory protein FanB (fanB) of Escherichia coli.